Consider the following 49-residue polypeptide: Osteocalcin (49 aa).

The 47-residue stretch at 1–47 folds into the Gla domain; sequence YLDSGLGAPVPYPDPLEPKREVCELNPNCDELADHIGFQEAYQRFYG. Glu-17, Glu-21, Glu-24, and Asp-30 together coordinate Ca(2+). 4-carboxyglutamate is present on residues Glu-17, Glu-21, and Glu-24. Residues Cys-23 and Cys-29 are joined by a disulfide bond.

It belongs to the osteocalcin/matrix Gla protein family. Gamma-carboxyglutamate residues are formed by vitamin K dependent carboxylation by GGCX. These residues are essential for the binding of calcium. Decarboxylation promotes the hormone activity.

The protein localises to the secreted. Its function is as follows. The carboxylated form is one of the main organic components of the bone matrix, which constitutes 1-2% of the total bone protein. It acts as a negative regulator of bone formation and is required to limit bone formation without impairing bone resorption or mineralization. The carboxylated form binds strongly to apatite and calcium. The uncarboxylated form acts as a hormone secreted by osteoblasts, which regulates different cellular processes, such as energy metabolism, male fertility and brain development. Regulates of energy metabolism by acting as a hormone favoring pancreatic beta-cell proliferation, insulin secretion and sensitivity and energy expenditure. Uncarboxylated osteocalcin hormone also promotes testosterone production in the testes: acts as a ligand for G protein-coupled receptor GPRC6A at the surface of Leydig cells, initiating a signaling response that promotes the expression of enzymes required for testosterone synthesis in a CREB-dependent manner. Also acts as a regulator of brain development: osteocalcin hormone crosses the blood-brain barrier and acts as a ligand for GPR158 on neurons, initiating a signaling response that prevents neuronal apoptosis in the hippocampus, favors the synthesis of all monoamine neurotransmitters and inhibits that of gamma-aminobutyric acid (GABA). Osteocalcin also crosses the placenta during pregnancy and maternal osteocalcin is required for fetal brain development. This chain is Osteocalcin (BGLAP), found in Canis lupus familiaris (Dog).